Consider the following 1291-residue polypeptide: Cytoplasmic FMR1-interacting protein (1291 aa).

Positions 1270–1291 (PSVISSSSHYQDPQKLRQSINN) are disordered. Over residues 1271-1291 (SVISSSSHYQDPQKLRQSINN) the composition is skewed to polar residues.

The protein belongs to the CYFIP family. Interacts with Fmr1 and Rac1. Component of the WAVE complex composed of Hem/Kette, Scar/Wave and Cyfip where it binds through its C-terminus directly to Hem. As to expression, in the embryo, expressed mainly in the gut and in the developing central nervous system where high levels of expression are found in the CNS neuropile. Expression in the gut diminishes as development proceeds (at protein level). In the adult, expressed specifically in the nervous system.

The protein localises to the cytoplasm. Its function is as follows. Plays a role in guidance and morphology of central and peripheral axons and in synaptic morphology. Also required for formation of cell membrane protrusions and for bristle development. Plays a role in regulating mitochondrial activity, energy metabolism and membrane potential which maintains normal gamma-aminobutyric acid (GABA) signaling and ensures normal social behavior. The polypeptide is Cytoplasmic FMR1-interacting protein (Drosophila melanogaster (Fruit fly)).